The following is a 636-amino-acid chain: Topoisomerase I damage affected protein 7 (636 aa).

Over residues 1–18 (MNSNSTIGRTTLGESDTI) the composition is skewed to polar residues. Disordered regions lie at residues 1 to 33 (MNSN…NSRS), 87 to 109 (TLVS…QYDP), 238 to 271 (ISSP…SSTN), 299 to 326 (PTSS…DDTT), and 339 to 362 (QSTT…STSP). N-linked (GlcNAc...) asparagine glycosylation is present at Asn4. Low complexity-rich tracts occupy residues 19–33 (SLSF…NSRS) and 87–108 (TLVS…SQYD). The N-linked (GlcNAc...) asparagine glycan is linked to Asn257. The chain crosses the membrane as a helical span at residues 457 to 477 (IVGSVVGSVGGILICVLVVWF). Asn492 carries N-linked (GlcNAc...) asparagine glycosylation. Positions 510 to 541 (QAKEASLQAQDSGSQQRNTETASANNPFSNEF) are enriched in polar residues. Positions 510-551 (QAKEASLQAQDSGSQQRNTETASANNPFSNEFNFKARGNPPP) are disordered. Residue Lys512 forms a Glycyl lysine isopeptide (Lys-Gly) (interchain with G-Cter in ubiquitin) linkage. Asn557, Asn562, and Asn626 each carry an N-linked (GlcNAc...) asparagine glycan. At Ser628 the chain carries Phosphoserine.

Belongs to the TDA7 family.

It is found in the vacuole membrane. The polypeptide is Topoisomerase I damage affected protein 7 (TDA7) (Saccharomyces cerevisiae (strain YJM789) (Baker's yeast)).